A 260-amino-acid polypeptide reads, in one-letter code: Recombination-promoting nuclease RpnD (260 aa).

This sequence belongs to the Rpn/YhgA-like nuclease family.

A low activity DNA endonuclease probably yielding 3'-hydroxyl ends. Involved in RecA-independent recombination and horizontal gene transfer. The chain is Recombination-promoting nuclease RpnD (rpnD) from Escherichia coli O157:H7.